The primary structure comprises 750 residues: Photosystem I P700 chlorophyll a apoprotein A1 (750 aa).

8 helical membrane-spanning segments follow: residues 70–93 (VFSA…FHGA), 156–179 (LYCT…FHYH), 195–219 (LNHH…HVSL), 291–309 (IAHH…GHMY), 346–369 (WHAQ…HHMY), 385–411 (LSLF…IFMV), 433–455 (AIIS…LYIH), and 531–549 (FLVH…LILL). Positions 573 and 582 each coordinate [4Fe-4S] cluster. The next 2 membrane-spanning stretches (helical) occupy residues 589 to 610 (HVFL…HFSW) and 664 to 686 (LSAY…MFLF). His675 contributes to the chlorophyll a' binding site. The chlorophyll a site is built by Met683 and Tyr691. Trp692 contacts phylloquinone. A helical membrane pass occupies residues 724–744 (AVGVTHYLLGGIATTWAFFLA).

This sequence belongs to the PsaA/PsaB family. As to quaternary structure, the PsaA/B heterodimer binds the P700 chlorophyll special pair and subsequent electron acceptors. PSI consists of a core antenna complex that captures photons, and an electron transfer chain that converts photonic excitation into a charge separation. The eukaryotic PSI reaction center is composed of at least 11 subunits. Requires P700 is a chlorophyll a/chlorophyll a' dimer, A0 is one or more chlorophyll a, A1 is one or both phylloquinones and FX is a shared 4Fe-4S iron-sulfur center. as cofactor.

The protein localises to the plastid. It is found in the chloroplast thylakoid membrane. The catalysed reaction is reduced [plastocyanin] + hnu + oxidized [2Fe-2S]-[ferredoxin] = oxidized [plastocyanin] + reduced [2Fe-2S]-[ferredoxin]. PsaA and PsaB bind P700, the primary electron donor of photosystem I (PSI), as well as the electron acceptors A0, A1 and FX. PSI is a plastocyanin-ferredoxin oxidoreductase, converting photonic excitation into a charge separation, which transfers an electron from the donor P700 chlorophyll pair to the spectroscopically characterized acceptors A0, A1, FX, FA and FB in turn. Oxidized P700 is reduced on the lumenal side of the thylakoid membrane by plastocyanin. The sequence is that of Photosystem I P700 chlorophyll a apoprotein A1 from Citrus sinensis (Sweet orange).